The chain runs to 95 residues: MTDESMSYQEKAYALLQADAEKIIQLIRVQMDHLTMPQCPLYEEVLDTQMFGLSREIDFAVRLGLIEAKEGKALLDRLERELSALHEAVTKKRVR.

This sequence belongs to the UPF0358 family.

The polypeptide is UPF0358 protein GTNG_0942 (Geobacillus thermodenitrificans (strain NG80-2)).